A 501-amino-acid chain; its full sequence is Mitogen-activated protein kinase 16 (501 aa).

The 292-residue stretch at 22–313 folds into the Protein kinase domain; the sequence is YEVTEVVGKG…AAEALTDPYF (292 aa). ATP contacts are provided by residues 28–36 and Lys51; that span reads VGKGSYGVV. Asp148 (proton acceptor) is an active-site residue. Phosphothreonine is present on Thr184. Positions 184 to 186 match the TXY motif; that stretch reads TDY. Tyr186 is modified (phosphotyrosine). Residues 477–501 form a disordered region; that stretch reads DEESMSEYMNEAADGVPHKIAQLKT.

This sequence belongs to the protein kinase superfamily. CMGC Ser/Thr protein kinase family. MAP kinase subfamily. Post-translationally, dually phosphorylated on Thr-184 and Tyr-186, which activates the enzyme.

The enzyme catalyses L-seryl-[protein] + ATP = O-phospho-L-seryl-[protein] + ADP + H(+). The catalysed reaction is L-threonyl-[protein] + ATP = O-phospho-L-threonyl-[protein] + ADP + H(+). Activated by threonine and tyrosine phosphorylation. The protein is Mitogen-activated protein kinase 16 (MPK16) of Oryza sativa subsp. japonica (Rice).